The sequence spans 1182 residues: Tyrosine-protein kinase ABL2 (1182 aa).

The tract at residues 1 to 42 (MGQQVGRVGEAPGLQQPQPRGIRGSSAARPSGRRRDPAGRTA) is disordered. G2 carries the N-myristoyl glycine lipid modification. A CAP region spans residues 2–106 (GQQVGRVGEA…SKENLLGATE (105 aa)). Low complexity predominate over residues 20–30 (RGIRGSSAARP). S97 carries the post-translational modification Phosphoserine. In terms of domain architecture, SH3 spans 107–167 (SDPNLFVALY…PSNYITPVNS (61 aa)). Residues Y116, Y161, Y174, Y185, Y218, and Y231 each carry the phosphotyrosine modification. The SH2 domain occupies 173–263 (WYHGPVSRSA…GLVTTLHYPA (91 aa)). Y261 carries the post-translational modification Phosphotyrosine; by ABL1 and autocatalysis. Phosphotyrosine; by autocatalysis is present on Y272. Phosphoserine is present on S275. The region spanning 288–539 (ITMKHKLGGG…PSFAETHQAF (252 aa)) is the Protein kinase domain. ATP is bound at residue 294 to 302 (LGGGQYGEV). Y299 and Y303 each carry phosphotyrosine. Residues K317 and 362–368 (EYMPYGN) contribute to the ATP site. The active-site Proton acceptor is the D409. A Kinase activation loop motif is present at residues 427–451 (DFGLSRLMTGDTYTAHAGAKFPIKW). Phosphotyrosine; by autocatalysis and SRC-type Tyr-kinases is present on Y439. A Phosphotyrosine modification is found at Y459. Y568 carries the post-translational modification Phosphotyrosine; by autocatalysis. Phosphoserine is present on residues S606, S621, S632, S634, and S656. 2 disordered regions span residues 612-642 (IRST…DAKE) and 655-674 (SSFM…SSFR). The short motif at 659–661 (KKR) is the Nuclear localization signal element. Phosphoserine is present on residues S670, S671, and S672. Phosphotyrosine; by autocatalysis is present on Y684. The F-actin-binding stretch occupies residues 695-930 (SLQNADGFSV…AVLPTTHNHK (236 aa)). A Phosphotyrosine modification is found at Y719. Residues 765–796 (LRAGKPTASDDTSKPFPRSNSTSSMSSGLPEQ) form a disordered region. The residue at position 778 (K778) is an N6-acetyllysine. A compositionally biased stretch (polar residues) spans 782-793 (RSNSTSSMSSGL). Position 785 is a phosphoserine (S785). A Phosphothreonine modification is found at T802. Positions 809–825 (RSKLQLERTVSTSSQPE) are enriched in polar residues. The interval 809–858 (RSKLQLERTVSTSSQPEENVDRANDMLPKKSEEGAAPARERPKAKLLPRG) is disordered. Phosphoserine occurs at positions 819 and 822. Residues 827–851 (NVDRANDMLPKKSEEGAAPARERPK) show a composition bias toward basic and acidic residues. Residues S915 and S936 each carry the phosphoserine modification. Residues 964–1059 (HQVTSSGDKD…TSSISPAKMA (96 aa)) form a disordered region. Residues 1020–1182 (EGGKKAAPGP…VQEISDVVQR (163 aa)) form an F-actin-binding region.

Belongs to the protein kinase superfamily. Tyr protein kinase family. ABL subfamily. In terms of assembly, interacts with PSMA7. Interacts with CTTN. Found in a complex with ABL1, ABL2, CRK and UNC119; leading to the inhibition of CRK phosphorylation by ABL kinases. Mg(2+) is required as a cofactor. Requires Mn(2+) as cofactor. Phosphorylated at Tyr-261 by ABL1 in response to oxidative stress. Phosphorylated by PDGFRB. In terms of processing, polyubiquitinated. Polyubiquitination of ABL2 leads to degradation. Most abundant in adult mouse brain, especially in synapse-rich regions.

It is found in the cytoplasm. Its subcellular location is the cytoskeleton. The enzyme catalyses L-tyrosyl-[protein] + ATP = O-phospho-L-tyrosyl-[protein] + ADP + H(+). Stabilized in the inactive form by an association between the SH3 domain and the SH2-TK linker region, interactions of the N-terminal cap, and contributions from an N-terminal myristoyl group and phospholipids. Activated by autophosphorylation as well as by SRC-family kinase-mediated phosphorylation. Activated by RIN1 binding to the SH2 and SH3 domains. Inhibited by imatinib mesylate (Gleevec). Phosphatidylinositol 4,5-bisphosphate (PIP2), a highly abundant phosphoinositide known to regulate cytoskeletal and membrane proteins, inhibits the tyrosine kinase activity. Functionally, non-receptor tyrosine-protein kinase that plays an ABL1-overlapping role in key processes linked to cell growth and survival such as cytoskeleton remodeling in response to extracellular stimuli, cell motility and adhesion, receptor endocytosis, autophagy, DNA damage response and apoptosis. Coordinates actin remodeling through tyrosine phosphorylation of proteins controlling cytoskeleton dynamics like MYH10 (involved in movement); CTTN (involved in signaling); or TUBA1 and TUBB (microtubule subunits). Binds directly F-actin and regulates actin cytoskeletal structure through its F-actin-bundling activity. Involved in the regulation of cell adhesion and motility through phosphorylation of key regulators of these processes such as CRK, CRKL or DOK1. Required for adhesion-dependent phosphorylation of ARHGAP35 which promotes its association with RASA1, resulting in recruitment of ARHGAP35 to the cell periphery where it inhibits RHO. Phosphorylates multiple receptor tyrosine kinases like PDGFRB and other substrates which are involved in endocytosis regulation such as RIN1. In brain, may regulate neurotransmission by phosphorylating proteins at the synapse. Finally, functions as its own regulator through autocatalytic activity as well as through phosphorylation of its inhibitor, ABI1. Positively regulates chemokine-mediated T-cell migration, polarization, and homing to lymph nodes and immune-challenged tissues, potentially via activation of NEDD9/HEF1 and RAP1. The sequence is that of Tyrosine-protein kinase ABL2 from Mus musculus (Mouse).